The sequence spans 1233 residues: NACHT, LRR and PYD domains-containing protein 1b allele 1 (1233 aa).

A disordered region spans residues 1-22 (MEESPPKQKSNTKVAQHEGQQD). Residues 126–435 (QLVIIEGAAG…EFFAAISCIL (310 aa)) enclose the NACHT domain. 132–139 (GAAGIGKS) is a binding site for ATP. 2 LRR repeats span residues 627–647 (NLEG…QSLC) and 684–704 (SLTE…RMLC). The tract at residues 850 to 983 (FWGPIGPVAT…GYTVLKNPSF (134 aa)) is ZU5. In terms of domain architecture, FIIND spans 850–1133 (FWGPIGPVAT…LRPALPRIAQ (284 aa)). Residues 984-1133 (SPMGVVLRII…LRPALPRIAQ (150 aa)) form a UPA region. The region spanning 1143–1226 (HFMDQHREQL…HLVMDLLEKS (84 aa)) is the CARD domain.

The protein belongs to the NLRP family. Interacts with DPP9; leading to inhibit activation of the inflammasome. DPP9 acts via formation of a ternary complex, composed of a DPP9 homodimer, one full-length Nlrp1b protein, and one cleaved C-terminus of Nlrp1b (NACHT, LRR and PYD domains-containing protein 1b, C-terminus). Interacts with DPP8; leading to inhibit activation of the inflammasome, probably via formation of a ternary complex with DPP8. Interacts (via LRR repeats) with BCL2 and BCL2L1 (via the loop between motifs BH4 and BH3). Interacts with NOD2; this interaction may increase IL1B release. Interacts with EIF2AK2/PKR; this interaction requires EIF2AK2 activity, is accompanied by EIF2AK2 autophosphorylation and promotes inflammasome assembly in response to B.anthracis lethal toxin. Interacts with MEFV; this interaction targets Nlrp1b to degradation by autophagy, hence preventing excessive IL1B- and IL18-mediated inflammation. In terms of assembly, interacts with the C-terminal part of Nlrp1b (NACHT, LRR and PYD domains-containing protein 1b, C-terminus) in absence of pathogens and other damage-associated signals. As to quaternary structure, interacts with the N-terminal part of Nlrp1b (NACHT, LRR and PYD domains-containing protein 1b, N-terminus) in absence of pathogens and other damage-associated signals. Homomultimer; forms the Nlrp1b inflammasome polymeric complex, a filament composed of homopolymers of this form in response to pathogens and other damage-associated signals. The Nlrp1b inflammasome polymeric complex directly recruits pro-caspase-1 (proCASP1) independently of PYCARD/ASC. Interacts (via CARD domain) with CASP1 (via CARD domain); leading to CASP1 activation. In terms of processing, autocatalytically cleaved. Autocatalytic cleavage in FIIND region occurs constitutively, prior to activation signals, and is required for inflammasome activity (IL1B release), possibly by facilitating CASP1 binding. Both N- and C-terminal parts remain associated non-covalently. Post-translationally, ubiquitinated by UBR2, a component of the N-end rule pathway in response to pathogens and other damage-associated signals, leading to its degradation by the proteasome and subsequent release of the cleaved C-terminal part of the protein (NACHT, LRR and PYD domains-containing protein 1b, C-terminus), which polymerizes and forms the Nlrp1b inflammasome. (Microbial infection) Cleavage by B.anthracis lethal toxin (LT) endopeptidase promotes ubiquitination and degradation of the N-terminal part, releasing the cleaved C-terminal part of the protein (NACHT, LRR and PYD domains-containing protein 1b, C-terminus), which polymerizes and forms the Nlrp1b inflammasome. In terms of processing, (Microbial infection) Ubiquitinated by S.flexneri IpaH7.8, leading to its degradation by the proteasome and subsequent release of the cleaved C-terminal part of the protein (NACHT, LRR and PYD domains-containing protein 1b, C-terminus), which polymerizes and forms the Nlrp1b inflammasome. As to expression, widely expressed, including in macrophages.

It is found in the cytoplasm. It localises to the cytosol. Its subcellular location is the membrane. The protein resides in the inflammasome. Activated by cleavage by B.anthracis lethal toxin (LT) endopeptidase: cleavage by LT promotes ubiquitination and degradation of the N-terminal part, releasing the cleaved C-terminal part of the protein (NACHT, LRR and PYD domains-containing protein 1b, C-terminus), which polymerizes and forms the Nlrp1b inflammasome. Activated by S.flexneri IpaH7.8, an E3 ubiquitin ligase that mediates ubiquitination and degradation of the N-terminal part, releasing the cleaved C-terminal part of the protein, which polymerizes and forms the Nlrp1b inflammasome. Nlrp1b inflammasome is inhibited by DPP8 and DPP9, which sequester the C-terminal fragment of Nlrp1b (NACHT, LRR and PYD domains-containing protein 1b, C-terminus) in a ternary complex, thereby preventing Nlrp1b oligomerization and activation. Nlrp1b inflammasome is activated by Val-boroPro (Talabostat, PT-100), an inhibitor of dipeptidyl peptidases DPP8 and DPP9. Val-boroPro relieves inhibition of DPP8 and/or DPP9 by promoting disruption of the ternary complex, releasing its C-terminal part from autoinhibition. Activated by metabolic inhibitors, such as 2-deoxy-D-glucose and sodium azide, by nutrient deprivation and hypoxia, possibly due to a decrease in cytosolic ATP. Also activated by Toxoplasma gondii. Not activated by muramyl dipeptide, nor by full-length bacterial peptidoglycan. Contrary to its human ortholog, not activated by positive-strand RNA virus such as Semliki Forrest virus or long dsRNA. Acts as the sensor component of the Nlrp1b inflammasome, which mediates inflammasome activation in response to various pathogen-associated signals, leading to subsequent pyroptosis. Inflammasomes are supramolecular complexes that assemble in the cytosol in response to pathogens and other damage-associated signals and play critical roles in innate immunity and inflammation. Acts as a recognition receptor (PRR): recognizes specific pathogens and other damage-associated signals, such as B.anthracis lethal toxin (LT) or Val-boroPro inhibitor, and mediates the formation of the inflammasome polymeric complex. In response to pathogen-associated signals, the N-terminal part of Nlrp1b is degraded by the proteasome, releasing the cleaved C-terminal part of the protein (NACHT, LRR and PYD domains-containing protein 1b, C-terminus), which polymerizes to initiate the formation of the inflammasome complex: the inflammasome directly recruits pro-caspase-1 (proCASP1) independently of PYCARD/ASC and promotes caspase-1 (CASP1) activation, which subsequently cleaves and activates inflammatory cytokines IL1B and IL18 and gasdermin-D (GSDMD), leading to pyroptosis. In the absence of GSDMD expression, the Nlrp1b inflammasome is able to recruit and activate CASP8, leading to activation of gasdermin-E (GSDME). Activation of Nlrp1b inflammasome is also required for HMGB1 secretion; the active cytokines and HMGB1 stimulate inflammatory responses. Primary mediator of macrophage susceptibility to B.anthracis LT: in response to B.anthracis infection, macrophages and dendritic cells release IL1B and undergo pyroptosis. This early inflammatory response to the toxin increases resistance to infection by B.anthracis spores. Functionally, constitutes the precursor of the Nlrp1b inflammasome, which mediates autoproteolytic processing within the FIIND domain to generate the N-terminal and C-terminal parts, which are associated non-covalently in absence of pathogens and other damage-associated signals. In terms of biological role, regulatory part that prevents formation of the Nlrp1b inflammasome: in absence of pathogens and other damage-associated signals, interacts with the C-terminal part of Nlrp1b (NACHT, LRR and PYD domains-containing protein 1b, C-terminus), preventing activation of the Nlrp1b inflammasome. In response to pathogen-associated signals, this part is ubiquitinated by the N-end rule pathway and degraded by the proteasome, releasing the cleaved C-terminal part of the protein, which polymerizes and forms the Nlrp1b inflammasome. Its function is as follows. Constitutes the active part of the Nlrp1b inflammasome. In absence of pathogens and other damage-associated signals, interacts with the N-terminal part of Nlrp1b (NACHT, LRR and PYD domains-containing protein 1b, N-terminus), preventing activation of the Nlrp1b inflammasome. In response to pathogen-associated signals, the N-terminal part of Nlrp1b is degraded by the proteasome, releasing this form, which polymerizes to form the Nlrp1b inflammasome complex: the Nlrp1b inflammasome complex then directly recruits pro-caspase-1 (proCASP1) and promotes caspase-1 (CASP1) activation, leading to gasdermin-D (GSDMD) cleavage and subsequent pyroptosis. This chain is NACHT, LRR and PYD domains-containing protein 1b allele 1, found in Mus musculus (Mouse).